Here is a 429-residue protein sequence, read N- to C-terminus: MFKRIALVCALFSGVCFAEGKQLLDKVVAIVNDNVITSSELNAQVELSKKQIIAQNMQMPDESVLRKQVLQHLIDVDLEMQMAKQNGITIENAEIDEAIEKIAASNHLNLSQMRDEITKQGISWQEYRQNIRKEMLISRVQQKAVGKDIIVTNEQVDQYLKTAGRIENSNLTYHLKNIVIPLSEEPTTRQLQRAKIEAENLLNKIKKGEDFSRLAIEESSGEFALEGGDLGERHLAELPEVFAKEVVHMKVGQVAGPIRAGNGFHLIKLVAVGGENQRHVITQTHVRHILLKPDASMVPSEAIKQVNNIYRQIQSGKDFALMAKQYSLDAASAVKGGDLGWVNPGELVPEFEKTMNSLPLHKVSKPVKTQYGWHLIEVIARRQKDDSEAFKKQQVRQFLQQRKFVEAVQNWQQHLRSQAYINIVDKDLA.

Residues 1-18 (MFKRIALVCALFSGVCFA) form the signal peptide. PpiC domains follow at residues 170 to 271 (NLTY…KLVA) and 281 to 380 (ITQT…EVIA).

The protein resides in the periplasm. It carries out the reaction [protein]-peptidylproline (omega=180) = [protein]-peptidylproline (omega=0). Its function is as follows. Chaperone involved in the correct folding and assembly of outer membrane proteins. Recognizes specific patterns of aromatic residues and the orientation of their side chains, which are found more frequently in integral outer membrane proteins. May act in both early periplasmic and late outer membrane-associated steps of protein maturation. This chain is Chaperone SurA, found in Legionella pneumophila (strain Lens).